The sequence spans 456 residues: E3 ubiquitin-protein ligase RNF25 (456 aa).

Residues 18 to 127 (SEVEVLESIY…EKGKEILTDN (110 aa)) form the RWD domain. Zn(2+) contacts are provided by Cys-134, Cys-137, Cys-152, His-154, His-157, Cys-160, Cys-195, and Cys-198. The RING-type zinc-finger motif lies at 134-199 (CVICLYGFQE…AVGVQCPVCR (66 aa)). A disordered region spans residues 269-456 (LEPESAVDVS…PLGLESEEGS (188 aa)). The span at 288–332 (SAEQSTSLADQSTLPTSLPMTTQYTYEKTSGAGPNQQRPGETQKS) shows a compositional bias: polar residues. Composition is skewed to basic and acidic residues over residues 364 to 388 (SEIH…EPRN) and 410 to 421 (RTRDCARWERSK).

This sequence belongs to the RNF25 family. Interacts with UBE2D2, and may also interact with UBE2E1 and UBE2E3. Interacts with RELA/p65. Ubiquitinated; autoubiquitinated. As to expression, ubiquitous.

The protein localises to the cytoplasm. It catalyses the reaction S-ubiquitinyl-[E2 ubiquitin-conjugating enzyme]-L-cysteine + [acceptor protein]-L-lysine = [E2 ubiquitin-conjugating enzyme]-L-cysteine + N(6)-ubiquitinyl-[acceptor protein]-L-lysine.. It functions in the pathway protein modification; protein ubiquitination. In terms of biological role, E3 ubiquitin-protein ligase that plays a key role in the RNF14-RNF25 translation quality control pathway, a pathway that takes place when a ribosome has stalled during translation, and which promotes ubiquitination and degradation of translation factors on stalled ribosomes. Catalyzes ubiquitination of RPS27A in response to ribosome collisions, promoting activation of RNF14. RNF25 catalyzes ubiquitination of other ribosomal proteins on stalled ribosomes, such as RPL0, RPL1, RPL12, RPS13 and RPS17. Also involved in ubiquitination and degradation of stalled ETF1/eRF1. Independently of its function in the response to stalled ribosomes, mediates ubiquitination and subsequent proteasomal degradation of NKD2. May also stimulate transcription mediated by NF-kappa-B via its interaction with RELA/p65. This is E3 ubiquitin-protein ligase RNF25 from Mus musculus (Mouse).